A 513-amino-acid polypeptide reads, in one-letter code: Zinc finger protein RFP (513 aa).

The segment at 16–57 (CPVCLQYFAEPMMLDCGHNICCACLARCWGTAETNVSCPQCR) adopts an RING-type zinc-finger fold. Positions 96, 99, 118, and 124 each coordinate Zn(2+). The segment at 96–127 (CEKHREPLKLYCEEDQMPICVVCDRSREHRGH) adopts a B box-type zinc-finger fold. Coiled-coil stretches lie at residues 132-172 (LEEA…AELL) and 282-311 (QKCL…LREA). A B30.2/SPRY domain is found at 298–492 (MQSDMEKIQE…SAAPLIICPM (195 aa)).

This sequence belongs to the TRIM/RBCC family. In terms of assembly, homomultimerizes. Part of a complex consisting of TRIM27, USP7 and MAGEL2; directly interacts with USP7. Interacts with PML, EIF3S6, EPC1, CHD4 and EID1. Interacts with MAGED4, MAGEF1 and MAGEL2. Interacts with PTPN11. Interacts with autophagy receptor p62/SQSTM1. (Microbial infection) Interacts with M.tuberculosis PtpA, whick blocks TRIM27-promoted JNK/p38 MAPK pathway activation and cell apoptosis. As to quaternary structure, (Microbial infection) Interacts with herpes simplex virus protein ICP0. In terms of tissue distribution, expressed in testis namely within the seminiferous tubules.

It localises to the nucleus. Its subcellular location is the cytoplasm. The protein localises to the PML body. The protein resides in the early endosome. It is found in the mitochondrion. The catalysed reaction is S-ubiquitinyl-[E2 ubiquitin-conjugating enzyme]-L-cysteine + [acceptor protein]-L-lysine = [E2 ubiquitin-conjugating enzyme]-L-cysteine + N(6)-ubiquitinyl-[acceptor protein]-L-lysine.. Its pathway is protein modification; protein ubiquitination. In terms of biological role, E3 ubiquitin-protein ligase that mediates ubiquitination of various substrates and thereby plays a role in diffent processes including proliferation, innate immunity, apoptosis, immune response or autophagy. Ubiquitinates PIK3C2B and inhibits its activity by mediating the formation of 'Lys-48'-linked polyubiquitin chains; the function inhibits CD4 T-cell activation. Acts as a regulator of retrograde transport: together with MAGEL2, mediates the formation of 'Lys-63'-linked polyubiquitin chains at 'Lys-220' of WASHC1, leading to promote endosomal F-actin assembly. Has a transcriptional repressor activity by cooperating with EPC1. Induces apoptosis by activating Jun N-terminal kinase and p38 kinase and also increases caspase-3-like activity independently of mitochondrial events. May function in male germ cell development. Has DNA-binding activity and preferentially bound to double-stranded DNA. Forms a complex with and ubiquitinates the ubiquitin-specific protease USP7, which in turn deubiquitinates RIPK1 resulting in the positive regulation of TNF-alpha-induced apoptosis. In addition, acts with USP7 or PTPN11 as an inhibitor of the antiviral signaling pathway by promoting kinase TBK1 ubiquitination and degradation. Acts as a negative regulator of NOD2 signaling by mediating ubiquitination of NOD2, promoting its degradation by the proteasome. Alternatively, facilitates mitophagy via stabilization of active TBK1. Negatively regulates autophagy flux under basal conditions by directly polyubiquitinating ULK1. During starvation-induced autophagy, catalyzes non-degradative ubiquitination of the kinase STK38L promoting its activation and phosphorylation of ULK1 leading to its ubiquitination and degradation to restrain the amplitude and duration of autophagy. Its function is as follows. (Microbial infection) Positively regulates hepatitis C virus replication by suppressing type I IFN response during infection. The chain is Zinc finger protein RFP from Homo sapiens (Human).